Here is a 187-residue protein sequence, read N- to C-terminus: ECF RNA polymerase sigma factor SigW (187 aa).

Positions 3–95 (MMIKKRIKQV…RKKKPDYYLD (93 aa)) are sigma-70 factor domain-2. The Polymerase core binding signature appears at 47–50 (DIAQ). Residues 125 to 187 (ELSNTIQQKI…EALRKQLRDL (63 aa)) form a sigma-70 factor domain-4 region. Positions 166 to 184 (VGTVKTRIHRGREALRKQL) form a DNA-binding region, H-T-H motif.

The protein belongs to the sigma-70 factor family. ECF subfamily. Interacts transiently with the RNA polymerase catalytic core formed by RpoA, RpoB, RpoC and RpoZ (2 alpha, 1 beta, 1 beta' and 1 omega subunit) to form the RNA polymerase holoenzyme that can initiate transcription. Forms a heterodimer with cognate anti-sigma factor RsiW, which prevents it from binding to the -10 and -35 promoter elements.

Its activity is regulated as follows. Extracytoplasmic function (ECF) sigma factors are held in an inactive form by a cognate anti-sigma factor (RsiW for this protein) until released by regulated membrane proteolysis (RIP). RIP occurs when an extracytoplasmic signal (envelope stress) triggers a concerted proteolytic cascade to transmit information and elicit cellular responses. The anti-sigma factor RsiW is a membrane protein, binding sigma-W in the cytoplasm. RsiW is first cut extracytoplasmically (site-1 protease, S1P, by PrsW), then within the membrane itself (site-2 protease, S2P, by RasP), while cytoplasmic proteases (predominantly ClpX-ClpP) finish degrading the regulatory protein, liberating sigma-W. Functionally, sigma factors are initiation factors that promote the attachment of RNA polymerase (RNAP) to specific initiation sites and are then released. Sigma-W controls genes involved in response to cell envelope stress such as antimicrobial peptides, alkaline pH, transport processes and detoxification. The polypeptide is ECF RNA polymerase sigma factor SigW (sigW) (Bacillus subtilis (strain 168)).